Reading from the N-terminus, the 226-residue chain is Large ribosomal subunit protein uL3 (226 aa).

Residues 135 to 150 show a composition bias toward polar residues; sequence MSSQRASHGNSRSHNV. The disordered stretch occupies residues 135–158; sequence MSSQRASHGNSRSHNVPGSIGMAQ. Gln-158 carries the post-translational modification N5-methylglutamine.

This sequence belongs to the universal ribosomal protein uL3 family. In terms of assembly, part of the 50S ribosomal subunit. Forms a cluster with proteins L14 and L19. Methylated by PrmB.

Functionally, one of the primary rRNA binding proteins, it binds directly near the 3'-end of the 23S rRNA, where it nucleates assembly of the 50S subunit. The sequence is that of Large ribosomal subunit protein uL3 from Variovorax paradoxus (strain S110).